Here is a 135-residue protein sequence, read N- to C-terminus: Small ribosomal subunit protein bS16m (135 aa).

The N-terminal 34 residues, 1–34 (MVQLTTVLCKAYRGGHLTIRLALGGCTNRPFYRI), are a transit peptide targeting the mitochondrion. Thr130 carries the phosphothreonine modification.

It belongs to the bacterial ribosomal protein bS16 family. As to quaternary structure, component of the mitochondrial ribosome small subunit (28S) which comprises a 12S rRNA and about 30 distinct proteins.

It is found in the mitochondrion. The chain is Small ribosomal subunit protein bS16m (MRPS16) from Bos taurus (Bovine).